A 432-amino-acid chain; its full sequence is Type I restriction enzyme MjaIX specificity subunit (432 aa).

The protein belongs to the type-I restriction system S methylase family. The type I restriction/modification system is composed of three polypeptides R, M and S.

Its function is as follows. The specificity (S) subunit of a type I restriction enzyme; this subunit dictates DNA sequence specificity. The M and S subunits together form a methyltransferase (MTase) that methylates A-3 on the top and A-2 on the bottom strand of the sequence 5'-CCAN(5)GTR-3'. In the presence of the R subunit the complex can also act as an endonuclease, binding to the same target sequence but cutting the DNA some distance from this site. Whether the DNA is cut or modified depends on the methylation state of the target sequence. When the target site is unmodified, the DNA is cut. When the target site is hemimethylated, the complex acts as a maintenance MTase modifying the DNA so that both strands become methylated. After locating a non-methylated recognition site, the enzyme complex serves as a molecular motor that translocates DNA in an ATP-dependent manner until a collision occurs that triggers cleavage. The polypeptide is Type I restriction enzyme MjaIX specificity subunit (hsdS) (Methanocaldococcus jannaschii (strain ATCC 43067 / DSM 2661 / JAL-1 / JCM 10045 / NBRC 100440) (Methanococcus jannaschii)).